The primary structure comprises 583 residues: MPKPINVRVTTMDAELEFAIQPNTTGKQLFDQVVKTVGLREVWFFGLQYVDSKGYSTWLKLNKKVTQQDVKKENPLQFKFRAKFFPEDVSEELIQEITQRLFFLQVKEAILNDEIYCPPETAVLLASYAVQAKYGDYNKEIHKPGYLANDRLLPQRVLEQHKLTKEQWEERIQNWHEEHRGMLREDSIMEYLKIAQDLEMYGVNYFEIKNKKGTELWLGVDALGLNIYEHDDKLTPKIGFPWSEIRNISFNDKKFVIKPIDKKAPDFVFYAPRLRINKRILALCMGNHELYMRRRKPDTIEVQQMKAQAREEKHQKQLERAQLENEKKKREIAEKEKERIEREKEELMERLRQIEEQTMKAQKELEEQTRKALELDQERKRAKEEAERLEKERRAAEEAKSAIAKQAADQMKNQEQLAAELAEFTAKIALLEEAKKKKEEEATEWQHKAFAAQEDLEKTKEELKTVMSAPPPPPPPPVVPPTENEHDEHDENNAEASAELSNDGVMNHRSEEERVTETQKNERVNKQLQALSSELAQARDETKKTQNDVLHAENVKAGRDKYKTLRQIRQGNTKQRIDEFEAM.

Positions 5–295 (INVRVTTMDA…GNHELYMRRR (291 aa)) constitute an FERM domain. 60–63 (KLNK) provides a ligand contact to a 1,2-diacyl-sn-glycero-3-phospho-(1D-myo-inositol). Lys-83 is subject to N6-succinyllysine. Lys-278 provides a ligand contact to a 1,2-diacyl-sn-glycero-3-phospho-(1D-myo-inositol). 3 disordered regions span residues 310-336 (REEKHQKQLERAQLENEKKKREIAEKE), 374-407 (ELDQERKRAKEEAERLEKERRAAEEAKSAIAKQA), and 458-526 (KTKE…RVNK). Residues 374–400 (ELDQERKRAKEEAERLEKERRAAEEAK) are compositionally biased toward basic and acidic residues. The segment covering 469–480 (APPPPPPPPVVP) has biased composition (pro residues). Composition is skewed to basic and acidic residues over residues 483–492 (ENEHDEHDEN) and 506–525 (MNHRSEEERVTETQKNERVN). Thr-564 carries the post-translational modification Phosphothreonine; by ROCK2.

Interacts with CPNE1 (via VWFA domain) and CPNE4 (via VWFA domain). Binds NHERF1. Interacts with NHERF1, NHERF2, LAYN, MME/NEP and ICAM2. Interacts (via FERM domain) with SPN/CD43 cytoplasmic tail. Interacts with CD44. Interacts with CLIC5; may work together in a complex which also includes EZR and MYO6 to stabilize linkages between the plasma membrane and subjacent actin cytoskeleton at the base of stereocilia. Phosphorylated by tyrosine-protein kinases. Phosphorylation by ROCK2 suppresses the head-to-tail association of the N-terminal and C-terminal halves resulting in an opened conformation which is capable of actin and membrane-binding.

Its subcellular location is the cell membrane. The protein resides in the cytoplasm. The protein localises to the cytoskeleton. It is found in the cleavage furrow. It localises to the cell projection. Its subcellular location is the microvillus. The protein resides in the stereocilium. With respect to regulation, a head-to-tail association, of the N-terminal and C-terminal halves results in a closed conformation (inactive form) which is incapable of actin or membrane-binding. Its function is as follows. Probably plays a crucial role in the binding of the barbed end of actin filaments to the plasma membrane. In Sus scrofa (Pig), this protein is Radixin (RDX).